Consider the following 425-residue polypeptide: Ribulose bisphosphate carboxylase (425 aa).

Catalysis depends on lysine 153, which acts as the Proton acceptor. Lysine 155 lines the substrate pocket. The Mg(2+) site is built by lysine 179, aspartate 181, and glutamate 182. Position 179 is an N6-carboxylysine (lysine 179). Residue histidine 269 is the Proton acceptor of the active site. Substrate is bound by residues arginine 270, histidine 302, 353–355 (SGG), and 375–378 (QAGG).

It belongs to the RuBisCO large chain family. Type III subfamily. Homodimer. In contrast to form I RuBisCO, the form III RuBisCO is composed solely of large subunits. Mg(2+) serves as cofactor.

It catalyses the reaction 2 (2R)-3-phosphoglycerate + 2 H(+) = D-ribulose 1,5-bisphosphate + CO2 + H2O. It carries out the reaction D-ribulose 1,5-bisphosphate + O2 = 2-phosphoglycolate + (2R)-3-phosphoglycerate + 2 H(+). Its activity is regulated as follows. Reversibly inhibited by O(2). In terms of biological role, catalyzes the addition of molecular CO(2) and H(2)O to ribulose 1,5-bisphosphate (RuBP), generating two molecules of 3-phosphoglycerate (3-PGA). Functions in an archaeal AMP degradation pathway, together with AMP phosphorylase and R15P isomerase. The chain is Ribulose bisphosphate carboxylase from Methanocaldococcus jannaschii (strain ATCC 43067 / DSM 2661 / JAL-1 / JCM 10045 / NBRC 100440) (Methanococcus jannaschii).